A 251-amino-acid polypeptide reads, in one-letter code: Insulin-induced gene 1 protein (251 aa).

Topologically, residues 1 to 58 (MQTLEEHCWSCSCTRGRDKKGTRLSTWLAQRAAKAMSSLNSLLSLAYHTLASSEGRSL) are cytoplasmic. The helical transmembrane segment at 59–81 (IRRSLVLFAVGVFLALVLNLLQI) threads the bilayer. Residues 82–100 (QRNVTLFPEEVIATIFSSA) lie on the Extracellular side of the membrane. Residues 101-118 (WWVPPCCGTAAAVVGLLY) form a helical membrane-spanning segment. Over 119 to 133 (PCIDSHLGEPHKFKR) the chain is Cytoplasmic. The helical transmembrane segment at 134-156 (EWASVMRCIAVFVGINHASAKLD) threads the bilayer. Residues 157–159 (FAN) are Extracellular-facing. Residues 160-178 (NVQLSLTLAALSLGLWWTF) traverse the membrane as a helical segment. Topologically, residues 179–183 (DRSRS) are cytoplasmic. The chain crosses the membrane as a helical span at residues 184–205 (GLGLGITIAFLATLITQFLVYN). Residues 206-219 (GVYQYTSPDFLYIR) are Extracellular-facing. The helical transmembrane segment at 220–237 (SWLPCIFFSGGVTVGNIG) threads the bilayer. The Cytoplasmic segment spans residues 238–251 (RQLAMGSSEKTHSD). The KxHxx motif lies at 245 to 251 (SEKTHSD).

The protein belongs to the INSIG family. As to quaternary structure, interacts with scap; interaction is direct and only takes place in the presence of sterols; it prevents interaction between scap and the coat protein complex II (COPII). Associates with the SCAP-SREBP complex; association is mediated via its interaction with scap and only takes place in the presence of sterols.

The protein localises to the endoplasmic reticulum membrane. Its function is as follows. Oxysterol-binding protein that mediates feedback control of cholesterol synthesis by controlling both endoplasmic reticulum to Golgi transport of scap and degradation of hmgcr. Acts as a negative regulator of cholesterol biosynthesis by mediating the retention of the SCAP-SREBP complex in the endoplasmic reticulum, thereby blocking the processing of sterol regulatory element-binding proteins (SREBPs). Binds oxysterol, including 25-hydroxycholesterol, regulating interaction with scap and retention of the SCAP-SREBP complex in the endoplasmic reticulum. In presence of oxysterol, interacts with scap, retaining the SCAP-SREBP complex in the endoplasmic reticulum, thereby preventing scap from escorting SREBPs to the Golgi. Sterol deprivation reduces oxysterol-binding, disrupting the interaction between insig1 and scap, thereby promoting Golgi transport of the SCAP-SREBP complex, followed by processing and nuclear translocation of SREBPs. Also regulates cholesterol synthesis by regulating degradation of hmgcr. The sequence is that of Insulin-induced gene 1 protein from Xenopus tropicalis (Western clawed frog).